The chain runs to 107 residues: U1-lycotoxin-Ls1d (107 aa).

Positions 1–20 (MMKVLVVVALLVTLISYSSS) are cleaved as a signal peptide. The propeptide occupies 21–41 (EGIDDLEADELLSLMANEQTR). 4 cysteine pairs are disulfide-bonded: C44–C59, C51–C68, C58–C86, and C70–C84.

The protein belongs to the neurotoxin 19 (CSTX) family. 04 (U1-Lctx) subfamily. Expressed by the venom gland.

Its subcellular location is the secreted. The protein is U1-lycotoxin-Ls1d of Lycosa singoriensis (Wolf spider).